A 263-amino-acid polypeptide reads, in one-letter code: Undecaprenyl-diphosphatase (263 aa).

The next 8 membrane-spanning stretches (helical) occupy residues 1 to 21 (MSYLHAIILGIVEGITEFLPI), 41 to 61 (FTKAFEVIIQFGAIMSVLVLY), 69 to 89 (WGFYRKLFVAFLPTAIIGFVV), 96 to 116 (LMGSVQVVAWSLIIGGVILIW), 147 to 167 (AIAMIPGVSRSGATIMGGLTL), 177 to 197 (FSFFLAVPTMAAATLYKLLKI), 208 to 228 (LLLVGCAVAFVVAMIAIKFFI), and 238 to 258 (GFGYYRIVLGLVILILLYTGH).

It belongs to the UppP family.

Its subcellular location is the cell inner membrane. The catalysed reaction is di-trans,octa-cis-undecaprenyl diphosphate + H2O = di-trans,octa-cis-undecaprenyl phosphate + phosphate + H(+). Functionally, catalyzes the dephosphorylation of undecaprenyl diphosphate (UPP). Confers resistance to bacitracin. This chain is Undecaprenyl-diphosphatase, found in Bdellovibrio bacteriovorus (strain ATCC 15356 / DSM 50701 / NCIMB 9529 / HD100).